The primary structure comprises 117 residues: Small ribosomal subunit protein uS19c (117 aa).

It belongs to the universal ribosomal protein uS19 family.

The protein resides in the plastid. Protein S19 forms a complex with S13 that binds strongly to the 16S ribosomal RNA. This Helicosporidium sp. subsp. Simulium jonesii (Green alga) protein is Small ribosomal subunit protein uS19c (rps19).